A 240-amino-acid chain; its full sequence is UDP-2,3-diacylglucosamine hydrolase (240 aa).

Residues aspartate 8, histidine 10, aspartate 41, asparagine 79, and histidine 114 each contribute to the Mn(2+) site. Substrate is bound at residue 79–80 (NR). Substrate-binding residues include aspartate 122, serine 160, asparagine 164, lysine 167, and histidine 195. Positions 195 and 197 each coordinate Mn(2+).

Belongs to the LpxH family. The cofactor is Mn(2+).

Its subcellular location is the cell inner membrane. The enzyme catalyses UDP-2-N,3-O-bis[(3R)-3-hydroxytetradecanoyl]-alpha-D-glucosamine + H2O = 2-N,3-O-bis[(3R)-3-hydroxytetradecanoyl]-alpha-D-glucosaminyl 1-phosphate + UMP + 2 H(+). The protein operates within glycolipid biosynthesis; lipid IV(A) biosynthesis; lipid IV(A) from (3R)-3-hydroxytetradecanoyl-[acyl-carrier-protein] and UDP-N-acetyl-alpha-D-glucosamine: step 4/6. Its function is as follows. Hydrolyzes the pyrophosphate bond of UDP-2,3-diacylglucosamine to yield 2,3-diacylglucosamine 1-phosphate (lipid X) and UMP by catalyzing the attack of water at the alpha-P atom. Involved in the biosynthesis of lipid A, a phosphorylated glycolipid that anchors the lipopolysaccharide to the outer membrane of the cell. This chain is UDP-2,3-diacylglucosamine hydrolase, found in Escherichia coli O127:H6 (strain E2348/69 / EPEC).